A 489-amino-acid polypeptide reads, in one-letter code: Dipeptide and tripeptide permease B (489 aa).

At 1 to 27 the chain is on the cytoplasmic side; the sequence is MNKPASIGLLQQPKPFFMIFFVELWER. Residues 28-48 form a helical membrane-spanning segment; that stretch reads FGYYGVQGILAVYFVHKLGFS. At 49–52 the chain is on the periplasmic side; sequence QEQA. The helical transmembrane segment at 53–73 threads the bilayer; the sequence is FTTFGAFAALVYGLIAIGGYV. At 74 to 82 the chain is on the cytoplasmic side; the sequence is GDHLLGTKR. A helical membrane pass occupies residues 83-103; it reads TIVLGAIVLTVGYFMTGLSIL. Residues 104–106 lie on the Periplasmic side of the membrane; sequence KPE. Residues 107 to 127 traverse the membrane as a helical segment; sequence LIFYALGTIAVGNGLFKANPA. At 128 to 146 the chain is on the cytoplasmic side; that stretch reads SLLSKCYPPKDPRLDGAFT. The chain crosses the membrane as a helical span at residues 147 to 167; it reads LFYMSINIGSLFSLAIAPVIA. The Periplasmic segment spans residues 168-171; it reads EKFG. The chain crosses the membrane as a helical span at residues 172–192; the sequence is YAVTYNICGIGLIIALLVYVL. Over 193–212 the chain is Cytoplasmic; it reads YRNTVRNIGSEPDHRPINYK. Helical transmembrane passes span 213–233 and 234–254; these read NLLL…WLMH and NVKI…FIFF. Topologically, residues 255-267 are cytoplasmic; the sequence is REAFKQDKVGRNK. Residues 268 to 288 traverse the membrane as a helical segment; that stretch reads MFVAFILMLQAIVFFILYAQM. At 289–311 the chain is on the periplasmic side; the sequence is PTSLNFFAINNVHHQLLGFNINP. The helical transmembrane segment at 312 to 332 threads the bilayer; it reads VSFQALNPFWIVVASPILAAL. Topologically, residues 333 to 350 are cytoplasmic; it reads YTHWGSRSKDLTMPAKFT. Residues 351-371 traverse the membrane as a helical segment; sequence VGMFLCSLGFLTAAAAGLWFA. The Periplasmic portion of the chain corresponds to 372-375; sequence DEQG. The helical transmembrane segment at 376–396 threads the bilayer; that stretch reads LTSPWFIVLVYLFQSLGELMI. The Cytoplasmic segment spans residues 397 to 419; sequence SALGLAMVAALVPQYLMGFILGM. Residues 420 to 440 form a helical membrane-spanning segment; the sequence is WYLTQATSFLLGGYVAAFTAI. At 441–456 the chain is on the periplasmic side; the sequence is PEGITDPLETLPVYTN. The chain crosses the membrane as a helical span at residues 457-477; sequence VFGKIGITTFIVAIIMAITVP. The Cytoplasmic portion of the chain corresponds to 478 to 489; it reads LLNRMMNGKQKA.

Belongs to the major facilitator superfamily. Proton-dependent oligopeptide transporter (POT/PTR) (TC 2.A.17) family. DtpB subfamily.

It is found in the cell inner membrane. Proton-dependent permease that transports di- and tripeptides. In Photorhabdus asymbiotica subsp. asymbiotica (strain ATCC 43949 / 3105-77) (Xenorhabdus luminescens (strain 2)), this protein is Dipeptide and tripeptide permease B.